Here is a 79-residue protein sequence, read N- to C-terminus: Large ribosomal subunit protein uL24 (79 aa).

It belongs to the universal ribosomal protein uL24 family. Part of the 50S ribosomal subunit.

In terms of biological role, one of two assembly initiator proteins, it binds directly to the 5'-end of the 23S rRNA, where it nucleates assembly of the 50S subunit. Functionally, one of the proteins that surrounds the polypeptide exit tunnel on the outside of the subunit. This Lactobacillus delbrueckii subsp. bulgaricus (strain ATCC 11842 / DSM 20081 / BCRC 10696 / JCM 1002 / NBRC 13953 / NCIMB 11778 / NCTC 12712 / WDCM 00102 / Lb 14) protein is Large ribosomal subunit protein uL24.